The primary structure comprises 460 residues: ATP synthase subunit beta (460 aa).

150–157 is an ATP binding site; the sequence is GGAGVGKT.

Belongs to the ATPase alpha/beta chains family. In terms of assembly, F-type ATPases have 2 components, CF(1) - the catalytic core - and CF(0) - the membrane proton channel. CF(1) has five subunits: alpha(3), beta(3), gamma(1), delta(1), epsilon(1). CF(0) has three main subunits: a(1), b(2) and c(9-12). The alpha and beta chains form an alternating ring which encloses part of the gamma chain. CF(1) is attached to CF(0) by a central stalk formed by the gamma and epsilon chains, while a peripheral stalk is formed by the delta and b chains.

Its subcellular location is the cell inner membrane. The enzyme catalyses ATP + H2O + 4 H(+)(in) = ADP + phosphate + 5 H(+)(out). Produces ATP from ADP in the presence of a proton gradient across the membrane. The catalytic sites are hosted primarily by the beta subunits. This is ATP synthase subunit beta from Photorhabdus laumondii subsp. laumondii (strain DSM 15139 / CIP 105565 / TT01) (Photorhabdus luminescens subsp. laumondii).